The sequence spans 151 residues: Deoxyuridine 5'-triphosphate nucleotidohydrolase (151 aa).

Substrate contacts are provided by residues 70–72, asparagine 83, 87–89, and methionine 97; these read RSG and LID.

It belongs to the dUTPase family. Mg(2+) serves as cofactor.

It catalyses the reaction dUTP + H2O = dUMP + diphosphate + H(+). Its pathway is pyrimidine metabolism; dUMP biosynthesis; dUMP from dCTP (dUTP route): step 2/2. Functionally, this enzyme is involved in nucleotide metabolism: it produces dUMP, the immediate precursor of thymidine nucleotides and it decreases the intracellular concentration of dUTP so that uracil cannot be incorporated into DNA. This chain is Deoxyuridine 5'-triphosphate nucleotidohydrolase, found in Actinobacillus succinogenes (strain ATCC 55618 / DSM 22257 / CCUG 43843 / 130Z).